The chain runs to 651 residues: Meiotic expression up-regulated protein 6 (651 aa).

Composition is skewed to basic and acidic residues over residues 1–12 (MSYEGREERPEQ) and 21–30 (VSEHNEHDSG). The disordered stretch occupies residues 1–102 (MSYEGREERP…EKKSKKKAKD (102 aa)). Over residues 72-83 (TVDNIDPADDDP) the composition is skewed to acidic residues. Residues 90–102 (KVEEKKSKKKAKD) show a composition bias toward basic and acidic residues. The region spanning 194–261 (CRGLLFYSKS…WITDLKNAIA (68 aa)) is the PH domain. Disordered regions lie at residues 365–430 (TVEA…GTPI), 468–514 (VATP…KGGN), and 587–630 (TIKP…QMPQ). Polar residues-rich tracts occupy residues 410–429 (ESTS…NGTP) and 478–490 (PSTA…SVVS). Residues 497-514 (KKAGKKHHRHHKKKKGGN) are compositionally biased toward basic residues. Positions 587–604 (TIKPETPLTPTTTPTPRT) are enriched in low complexity.

The chain is Meiotic expression up-regulated protein 6 (meu6) from Schizosaccharomyces pombe (strain 972 / ATCC 24843) (Fission yeast).